The sequence spans 71 residues: Cell division protein ZapB (71 aa).

Residues 5–67 (LEVLEQLESK…RALLGKMEQM (63 aa)) are a coiled coil.

Belongs to the ZapB family. Homodimer. The ends of the coiled-coil dimer bind to each other, forming polymers. Interacts with FtsZ.

It is found in the cytoplasm. Its function is as follows. Non-essential, abundant cell division factor that is required for proper Z-ring formation. It is recruited early to the divisome by direct interaction with FtsZ, stimulating Z-ring assembly and thereby promoting cell division earlier in the cell cycle. Its recruitment to the Z-ring requires functional FtsA or ZipA. The protein is Cell division protein ZapB of Aeromonas salmonicida (strain A449).